We begin with the raw amino-acid sequence, 693 residues long: Elongation factor G (693 aa).

Residues 8 to 282 (EHTRNIGIMA…AVIDFMPSPT (275 aa)) form the tr-type G domain. GTP-binding positions include 17 to 24 (AHIDAGKT), 81 to 85 (DTPGH), and 135 to 138 (NKMD).

This sequence belongs to the TRAFAC class translation factor GTPase superfamily. Classic translation factor GTPase family. EF-G/EF-2 subfamily.

It localises to the cytoplasm. Its function is as follows. Catalyzes the GTP-dependent ribosomal translocation step during translation elongation. During this step, the ribosome changes from the pre-translocational (PRE) to the post-translocational (POST) state as the newly formed A-site-bound peptidyl-tRNA and P-site-bound deacylated tRNA move to the P and E sites, respectively. Catalyzes the coordinated movement of the two tRNA molecules, the mRNA and conformational changes in the ribosome. The polypeptide is Elongation factor G (Ruminiclostridium cellulolyticum (strain ATCC 35319 / DSM 5812 / JCM 6584 / H10) (Clostridium cellulolyticum)).